A 239-amino-acid polypeptide reads, in one-letter code: 1-(5-phosphoribosyl)-5-[(5-phosphoribosylamino)methylideneamino] imidazole-4-carboxamide isomerase (239 aa).

The active-site Proton acceptor is the aspartate 8. The active-site Proton donor is aspartate 129.

The protein belongs to the HisA/HisF family.

Its subcellular location is the cytoplasm. The enzyme catalyses 1-(5-phospho-beta-D-ribosyl)-5-[(5-phospho-beta-D-ribosylamino)methylideneamino]imidazole-4-carboxamide = 5-[(5-phospho-1-deoxy-D-ribulos-1-ylimino)methylamino]-1-(5-phospho-beta-D-ribosyl)imidazole-4-carboxamide. It participates in amino-acid biosynthesis; L-histidine biosynthesis; L-histidine from 5-phospho-alpha-D-ribose 1-diphosphate: step 4/9. In Bacillus cereus (strain G9842), this protein is 1-(5-phosphoribosyl)-5-[(5-phosphoribosylamino)methylideneamino] imidazole-4-carboxamide isomerase.